Reading from the N-terminus, the 62-residue chain is MLTLKKSMLLIFFLGTINFSLCEQERNADEEERRDEPEERDVEVQKRILPFLAGLFSKILGK.

The first 22 residues, 1 to 22 (MLTLKKSMLLIFFLGTINFSLC), serve as a signal peptide directing secretion. The propeptide occupies 23 to 45 (EQERNADEEERRDEPEERDVEVQ). Leu60 carries the leucine amide modification. Residue Gly61 is a propeptide.

Expressed by the skin glands.

The protein resides in the secreted. Its function is as follows. Antimicrobial peptide. This Pelophylax fukienensis (Fukien gold-striped pond frog) protein is Pelophylaxin-4.